Here is a 189-residue protein sequence, read N- to C-terminus: Probable UbiX-like flavin prenyltransferase (189 aa).

Residues 9–11 (GAS), Ser36, 87–90 (SMKT), and Arg122 contribute to the FMN site.

This sequence belongs to the UbiX/PAD1 family. YclB subfamily. Homododecamer.

The enzyme catalyses dimethylallyl phosphate + FMNH2 = prenylated FMNH2 + phosphate. Its function is as follows. Involved in the non-oxidative decarboxylation and detoxification of phenolic derivatives under anaerobic conditions. Flavin prenyltransferase that catalyzes the synthesis of the prenylated FMN cofactor (prenyl-FMN) for phenolic acid decarboxylase. The protein is Probable UbiX-like flavin prenyltransferase of Sedimentibacter hydroxybenzoicus (Clostridium hydroxybenzoicum).